Here is a 239-residue protein sequence, read N- to C-terminus: MEGTVESQTPDLRDVEGKVGRKTPEGLLRGLRGECELGTSGALLLPGASSTGHDLGDKIMALKMELAYLRAIDVKILQQLVTLNEGIEAVRWLLEERGTLTSHCSSLTSSQYSLTGGSPGRSRRGSWDSLPDTSTTDRLDSVSIGSFLDTVAPSELDEQGPPGAPRSEMDWAKVIAGGERARTEVDVAATRLGSLRAVWKPPGERLQGGPPESPEDESAKLGFEAHWFWEQCQDDVTFL.

2 LRR repeats span residues 55 to 83 and 93 to 114; these read LGDK…LVTL and LLEE…QYSL. Positions 107-116 are enriched in low complexity; it reads LTSSQYSLTG. 2 disordered regions span residues 107 to 139 and 200 to 219; these read LTSS…TDRL and KPPG…DESA. 4 positions are modified to phosphoserine: Ser118, Ser126, Ser129, and Ser213.

In terms of assembly, forms a tripartite complex with CDC42BPA/CDC42BPB and MYO18A acting as an adapter connecting both. Its binding to CDC42BPA/CDC42BPB results in their activation by abolition of their negative autoregulation. Interacts with CDC42BPA and CDC42BPB.

It localises to the cytoplasm. In terms of biological role, acts as an activator of the canonical NF-kappa-B pathway and drive the production of pro-inflammatory cytokines. Promotes the antigen (Ag)-presenting and priming function of dendritic cells via the canonical NF-kappa-B pathway. In concert with MYO18A and CDC42BPA/CDC42BPB, is involved in modulating lamellar actomyosin retrograde flow that is crucial to cell protrusion and migration. Activates CDC42BPA/CDC42BPB and targets it to actomyosin through its interaction with MYO18A, leading to MYL9/MLC2 phosphorylation and MYH9/MYH10-dependent actomyosin assembly in the lamella. In Homo sapiens (Human), this protein is Leucine rich adaptor protein 1 (LURAP1).